A 498-amino-acid polypeptide reads, in one-letter code: Protein spinster homolog 3 (498 aa).

Transmembrane regions (helical) follow at residues 49-71 (IAVAVLCYINLLNYMDRYTIAGV), 87-107 (GLLQTVFICSFMFLAPVFGYL), 114-134 (KLIMIVGLVMWIVTTLGSSFV), 148-168 (LVGTGEASYSTIAPTIIGDLF), 175-195 (LMISFFYIFIPVGSGLGYIIG), 207-227 (WALRVSPALGGLGLLLLVFLI), 260-280 (FVWSSLGVTAMAFVTGALAFW), 309-329 (YIFGAITVVTGVVGVFLGTCI), 343-363 (LICAVGMLSSSPCFFIAIVLA), 373-393 (FIAIGETLLSLNWAILADILL), 407-427 (LQIMVCHLLGDAGSPYLIGAI), and 451-471 (LLCPFIGVLGGLFFLMTSLYI).

Belongs to the major facilitator superfamily. Spinster (TC 2.A.1.49) family.

Its subcellular location is the membrane. Sphingolipid transporter. This is Protein spinster homolog 3 (spns3) from Danio rerio (Zebrafish).